Reading from the N-terminus, the 518-residue chain is DNA nucleotidylexotransferase (518 aa).

The Nuclear localization signal motif lies at 11 to 17; the sequence is FGKKRQK. In terms of domain architecture, BRCT spans 27-124; it reads IYEIKFHEFV…KPVDTKGKYQ (98 aa). A mediates interaction with DNTTIP2 region spans residues 153–518; the sequence is SQYACQRRTT…EYIQPSERNA (366 aa). The tract at residues 260–264 is involved in DNA binding; the sequence is VGLKT. A 2'-deoxyribonucleoside 5'-triphosphate-binding positions include 335–340 and 344–347; these read GFRRGK and HDVD. Residues Asp345, Asp347, and Asp442 each coordinate Mg(2+). 457–458 serves as a coordination point for a 2'-deoxyribonucleoside 5'-triphosphate; the sequence is GW.

It belongs to the DNA polymerase type-X family. As to quaternary structure, interacts with PRP19 and DNTTIP1. Interacts with TRERF1. Forms a ternary complex with DNTTIP2 and core histone. Released from this complex by PCNA. It depends on Mg(2+) as a cofactor.

The protein localises to the nucleus. The enzyme catalyses DNA(n) + a 2'-deoxyribonucleoside 5'-triphosphate = DNA(n+1) + diphosphate. Template-independent DNA polymerase which catalyzes the random addition of deoxynucleoside 5'-triphosphate to the 3'-end of a DNA initiator. One of the in vivo functions of this enzyme is the addition of nucleotides at the junction (N region) of rearranged Ig heavy chain and T-cell receptor gene segments during the maturation of B- and T-cells. This Monodelphis domestica (Gray short-tailed opossum) protein is DNA nucleotidylexotransferase (DNTT).